We begin with the raw amino-acid sequence, 655 residues long: Epithelial sodium channel subunit alpha (655 aa).

Topologically, residues 1-55 (MTDKEEEAEGGKKKEPMIGFYDSYQELFEFFCNNTTIHGTIRMVCSKHNNMKTVS) are cytoplasmic. A helical transmembrane segment spans residues 56 to 76 (WTILFITTFGVMYWQFGLLLG). Residues 77-531 (QYYSYPVSIT…SQWSLWFGSS (455 aa)) lie on the Extracellular side of the membrane. 10 disulfides stabilise this stretch: C102–C275, C199–C206, C252–C259, C364–C448, C385–C425, C385–C444, C389–C440, C398–C425, C398–C448, and C400–C414. Residues 532-552 (VLSVVEMGELVFDLIAVGVIV) traverse the membrane as a helical segment. Residues 553–655 (LRRRRREKCQ…QEASEGPTVL (103 aa)) are Cytoplasmic-facing. Residues 561–587 (CQASSDGEGTSDSTAGTHRGQENASRS) form a disordered region. The segment covering 562 to 586 (QASSDGEGTSDSTAGTHRGQENASR) has biased composition (polar residues).

It belongs to the amiloride-sensitive sodium channel (TC 1.A.6) family. SCNN1A subfamily. As to quaternary structure, heterotrimer; containing an alpha/SCNN1A, a beta/SCNN1B and a gamma/SCNN1G subunit. In terms of tissue distribution, strongly expressed in gill, kidney and rectum (at protein level). More weakly expressed in muscle, brain, heart, liver and intestine.

It is found in the apical cell membrane. It localises to the cell projection. Its subcellular location is the cilium. The protein localises to the cytoplasmic granule. The protein resides in the cytoplasm. It is found in the cytoplasmic vesicle. It localises to the secretory vesicle. Its subcellular location is the acrosome. The protein localises to the flagellum. The enzyme catalyses Na(+)(in) = Na(+)(out). With respect to regulation, originally identified and characterized by its inhibition by the diuretic drug amiloride. This is one of the three pore-forming subunits of the heterotrimeric epithelial sodium channel (ENaC), a critical regulator of sodium balance and fluid homeostasis. ENaC operates in epithelial tissues, where it mediates the electrodiffusion of sodium ions from extracellular fluid through the apical membrane of cells, with water following osmotically. The protein is Epithelial sodium channel subunit alpha (scnn1a) of Neoceratodus forsteri (Australian lungfish).